The sequence spans 593 residues: Aspartate--tRNA(Asp/Asn) ligase (593 aa).

Glutamate 173 is a binding site for L-aspartate. Residues 197–200 (QLFK) are aspartate. An L-aspartate-binding site is contributed by arginine 219. ATP-binding positions include 219 to 221 (RDE) and glutamine 228. Histidine 451 serves as a coordination point for L-aspartate. Glutamate 485 serves as a coordination point for ATP. L-aspartate is bound at residue arginine 492. 537–540 (GIDR) is a binding site for ATP.

It belongs to the class-II aminoacyl-tRNA synthetase family. Type 1 subfamily. Homodimer.

It is found in the cytoplasm. It carries out the reaction tRNA(Asx) + L-aspartate + ATP = L-aspartyl-tRNA(Asx) + AMP + diphosphate. Aspartyl-tRNA synthetase with relaxed tRNA specificity since it is able to aspartylate not only its cognate tRNA(Asp) but also tRNA(Asn). Reaction proceeds in two steps: L-aspartate is first activated by ATP to form Asp-AMP and then transferred to the acceptor end of tRNA(Asp/Asn). The polypeptide is Aspartate--tRNA(Asp/Asn) ligase (Legionella pneumophila subsp. pneumophila (strain Philadelphia 1 / ATCC 33152 / DSM 7513)).